The following is a 742-amino-acid chain: Potassium transporter 19 (742 aa).

Over 1–46 (MSVQEDGAARPEPDVLRRHDSLYGDAEKVSNNKRHGAGGSWARTLQ) the chain is Cytoplasmic. Residues 47 to 67 (LAFQSIGVVYGDVGTSPLYVY) traverse the membrane as a helical segment. Over 68 to 83 (SSTFPNGIKHPDDLVG) the chain is Extracellular. A helical transmembrane segment spans residues 84 to 104 (VLSLILYTLILIPMVKYVFIV). At 105–170 (LYANDNGDGG…QKLESSNAAK (66 aa)) the chain is on the cytoplasmic side. Residues 171–191 (IALFTITILGTSMVMGDGTLT) traverse the membrane as a helical segment. Residues 192–206 (PAISVLSAVSGIREK) lie on the Extracellular side of the membrane. Residues 207-227 (APNLTQSQVVWISVAILFVLF) form a helical membrane-spanning segment. Over 228-236 (SMQRFGTDK) the chain is Cytoplasmic. Residues 237–257 (VGYTFAPVISVWFLLIAGIGM) form a helical membrane-spanning segment. Residues 258–287 (YNLTVHEITILRAFNPKYIVDYFRRNGKEA) are Extracellular-facing. N-linked (GlcNAc...) asparagine glycosylation occurs at asparagine 259. A helical transmembrane segment spans residues 288–308 (WVSLGGVVLCITGTEAMFADL). Residues 309–317 (GHFNIRAIQ) lie on the Cytoplasmic side of the membrane. A helical transmembrane segment spans residues 318–338 (LSFTCVLFPSVALCYMGQAAY). Over 339 to 352 (LRKFPENVGDTFYR) the chain is Extracellular. A helical transmembrane segment spans residues 353–373 (SIPAPLFWPVFVVAIMGAIIA). The Cytoplasmic segment spans residues 374-409 (SQAMLSGAFAILSKALSLGCFPRVEVVHTSNKYEGQ). The chain crosses the membrane as a helical span at residues 410–430 (VYIPEVNFLIGAASVAVTLAF). Over 431-441 (QTTANIGNAYG) the chain is Extracellular. A helical membrane pass occupies residues 442–462 (ICVVTVFSITTHLMTVVMLLI). Topologically, residues 463-468 (WKVRLP) are cytoplasmic. A helical transmembrane segment spans residues 469–489 (FIAAFYAAFGLAEFLYLSSIL). Topologically, residues 490 to 495 (SKFAEG) are extracellular. A helical membrane pass occupies residues 496–516 (GYLPFCFSLVLMALMATWHYV). Topologically, residues 517–742 (HVKRYWYELD…LLKVGITYEI (226 aa)) are cytoplasmic.

Belongs to the HAK/KUP transporter (TC 2.A.72.3) family.

It is found in the membrane. High-affinity potassium transporter. This is Potassium transporter 19 (HAK19) from Oryza sativa subsp. japonica (Rice).